The sequence spans 471 residues: Plasmepsin VII (471 aa).

The N-terminal stretch at 1–24 (MKSVYHHFAIIFFLKLFLCNCILS) is a signal peptide. In terms of domain architecture, Peptidase A1 spans 96–438 (YYGKIAIGEN…DKDNLQIGFV (343 aa)). Catalysis depends on residues Asp115 and Asp325.

The protein belongs to the peptidase A1 family.

Its subcellular location is the cytoplasm. The polypeptide is Plasmepsin VII (Plasmodium berghei (strain Anka)).